A 242-amino-acid chain; its full sequence is uncharacterized protein (242 aa).

Positions 2–69 constitute an S4 RNA-binding domain; the sequence is YRLAKIISNA…KPRLWIYYKP (68 aa). The Nucleophile role is filled by aspartate 102.

It belongs to the pseudouridine synthase RsuA family.

The catalysed reaction is a uridine in RNA = a pseudouridine in RNA. This is an uncharacterized protein from Rickettsia typhi (strain ATCC VR-144 / Wilmington).